The sequence spans 179 residues: Oryzines biosynthesis cluster protein J (179 aa).

Residues 88-148 (YVDYHPGCEP…NHCWRNPSKT (61 aa)) enclose the Cupin type-2 domain.

The protein belongs to the oryJ family.

It functions in the pathway secondary metabolite biosynthesis. Its function is as follows. Part of the gene cluster that mediates the biosynthesis of oryzines, natural products with an unusual maleidride backbone. The two subunits of the fungal fatty acid synthase oryfasA and oryfasB probably form octenoic acid. This fatty acid is most likely activated by the acyl-CoA ligase oryP to give octenyl-CoA before the citrate synthase-like protein oryE catalyzes condensation with oxaloacetate to form tricarboxylic acid. The next steps of the pathways are conjectural, but a favorite possible route has been proposed, beginning with decarboxylation and concomitant dehydration by the decarboxylase oryM, followed by tautomerization, which may lead to the production of a diene intermediate. Reduction of this diene intermediate could give the known metabolite piliformic acid. On the pathway to oryzine B and oryzine A, however, hydroxylation of the diene by the alpha-ketoglutarate-dependent dioxygenase oryG and lactonisation by the lactonohydrolases oryH or oryL could give oryzine B directly. Finally, enoyl reduction by the dehydrogenase oryD would then convert oryzine B into oryzine A. In Aspergillus oryzae (strain ATCC 42149 / RIB 40) (Yellow koji mold), this protein is Oryzines biosynthesis cluster protein J.